The primary structure comprises 194 residues: Transcriptional repressor NrdR (194 aa).

A zinc finger lies at C3–C33. One can recognise an ATP-cone domain in the interval P48–E138. Basic and acidic residues predominate over residues E168–S179. Positions E168 to N194 are disordered. The segment covering R185–N194 has biased composition (pro residues).

The protein belongs to the NrdR family. Requires Zn(2+) as cofactor.

Negatively regulates transcription of bacterial ribonucleotide reductase nrd genes and operons by binding to NrdR-boxes. This chain is Transcriptional repressor NrdR, found in Bdellovibrio bacteriovorus (strain ATCC 15356 / DSM 50701 / NCIMB 9529 / HD100).